A 472-amino-acid chain; its full sequence is Glutamine synthetase (472 aa).

The 85-residue stretch at 17–101 (YDIKFVLLRF…LRCSIYEPST (85 aa)) folds into the GS beta-grasp domain. The GS catalytic domain occupies 109 to 472 (PRSIAIRAEN…HPVEFEMYYA (364 aa)). Positions 134 and 136 each coordinate Mg(2+). An ATP-binding site is contributed by Glu212. Mg(2+)-binding residues include Glu217 and Glu225. Residues 269-270 (NG) and Gly270 each bind L-glutamate. His274 is a binding site for Mg(2+). ATP-binding positions include 276–278 (NMS) and Ser278. L-glutamate contacts are provided by Arg326, Glu332, and Arg344. ATP is bound by residues Arg344, Arg349, and Lys357. Position 362 (Glu362) interacts with Mg(2+). Position 364 (Arg364) interacts with L-glutamate. Tyr402 carries the O-AMP-tyrosine modification.

It belongs to the glutamine synthetase family. As to quaternary structure, oligomer of 12 subunits arranged in the form of two hexameric ring. The cofactor is Mg(2+).

It is found in the cytoplasm. The catalysed reaction is L-glutamate + NH4(+) + ATP = L-glutamine + ADP + phosphate + H(+). With respect to regulation, the activity of this enzyme could be controlled by adenylation under conditions of abundant glutamine. Catalyzes the ATP-dependent biosynthesis of glutamine from glutamate and ammonia. The protein is Glutamine synthetase of Pasteurella multocida (strain Pm70).